The following is a 448-amino-acid chain: Alginate biosynthesis transcriptional regulatory protein AlgB (448 aa).

A Response regulatory domain is found at 10–124 (RILLVDDESA…QLRLATAKQL (115 aa)). Asp59 bears the 4-aspartylphosphate mark. In terms of domain architecture, Sigma-54 factor interaction spans 147-376 (LDSHSPSMMA…LRNVIERASI (230 aa)). ATP is bound by residues 175–182 (GESGTGKG) and 238–247 (ADGGTLFLDE). The segment at residues 425-444 (LDQAAKTLGIDASTLYRKRK) is a DNA-binding region (H-T-H motif).

It functions in the pathway glycan biosynthesis; alginate biosynthesis [regulation]. Its function is as follows. Positive regulator of the alginate biosynthetic gene algD. This chain is Alginate biosynthesis transcriptional regulatory protein AlgB (algB), found in Pseudomonas syringae pv. tomato (strain ATCC BAA-871 / DC3000).